A 322-amino-acid chain; its full sequence is Homoserine kinase (322 aa).

106-116 (ALSSGMGGSAA) is an ATP binding site.

Belongs to the GHMP kinase family. Homoserine kinase subfamily.

Its subcellular location is the cytoplasm. It catalyses the reaction L-homoserine + ATP = O-phospho-L-homoserine + ADP + H(+). The protein operates within amino-acid biosynthesis; L-threonine biosynthesis; L-threonine from L-aspartate: step 4/5. Functionally, catalyzes the ATP-dependent phosphorylation of L-homoserine to L-homoserine phosphate. In Xanthomonas campestris pv. campestris (strain B100), this protein is Homoserine kinase.